The chain runs to 448 residues: O-Mevalon transferase yanI (448 aa).

N-linked (GlcNAc...) asparagine glycosylation occurs at Asn-2. 8 consecutive transmembrane segments (helical) span residues Val-21–Val-41, Tyr-54–Pro-74, Ala-79–Phe-96, Phe-165–Val-185, Leu-217–Leu-237, Met-316–Val-336, Val-350–Leu-370, and Ile-390–Leu-410.

This sequence belongs to the wax synthase family.

The protein resides in the membrane. The protein operates within secondary metabolite biosynthesis; terpenoid biosynthesis. Its function is as follows. O-Mevalon transferase yanI; part of the gene cluster that mediates the biosynthesis of yanuthone D, a fungal isoprenoid epoxycyclohexenone that acts as an antibiotic against fungi and bacteria. The first step of the pathway is the synthesis of 6-methylsalicylic acid (6-MSA) by the polyketide synthase yanA. 6-MSA is then converted to m-cresol by the decarboxylase yanB. The cytochrome P450 monooxygenase yanC then catalyzes the oxidation of m-cresol to toluquinol. Epoxidation of toluquinol is then performed by the short chain dehydrogenase yanD, with the help of yanE, and a further prenylation by yanG leads to 7-deacetoxyyanuthone A. The next step is the hydroxylation of C-22 of 7-deacetoxyyanuthone A by the cytochrome P450 monooxygenase yanH to yield 22-deacetylyanuthone A. O-Mevalon transferase yanI then attaches mevalon to the hydroxyl group of 22-deacetylyanuthone A to produce yanuthone E. Finally, the FAD-dependent monooxygenase yanF oxidizes the hydroxyl group at C15 of yanuthone E to form yanuthone D. Furthermore, several branching points in the pathway lead to the production of yanuthones F and G from 7-deacetoxyyanuthone A; yanuthones H and I from 22-deacetylyanuthone A; and yanuthone J from yanuthone E. This Aspergillus niger (strain ATCC 1015 / CBS 113.46 / FGSC A1144 / LSHB Ac4 / NCTC 3858a / NRRL 328 / USDA 3528.7) protein is O-Mevalon transferase yanI.